Reading from the N-terminus, the 47-residue chain is UPF0391 membrane protein rrnAC2507 (47 aa).

The next 2 membrane-spanning stretches (helical) occupy residues 5–25 and 27–47; these read VVLV…IAGL and FRVA…TFLL.

Belongs to the UPF0391 family.

It is found in the cell membrane. This Haloarcula marismortui (strain ATCC 43049 / DSM 3752 / JCM 8966 / VKM B-1809) (Halobacterium marismortui) protein is UPF0391 membrane protein rrnAC2507.